A 347-amino-acid polypeptide reads, in one-letter code: MKDENSINFLSSNESYLYDKSENELRPKVFEDFKGQVNVKETLSIFIRASKERGEALDHVFLSGPPGLGKTTLASIIAFEMNASIKITSAPAFDKPKDIIGILTGLDEKSILFIDEIHRLRPIIEEMLCIAMEDYELDWVIGQGANARTVRMPLPKFTLIGATTKPGKVTSPLYARFGITARFELYSEIELVEIIKRNSIILNIEIEEDAAFLLARSSRGTPRIANRLLRRIRDIAQVTGSLVVTSDIVSIGLEMLRIDGEGLDEQDRNILRSLILKFNGGPVGVDTLAISVGETADSLEDFYEPYLIMKGFINRTHRGRKATEFAYLHLNLEMKEEDISENQRVSF.

Residues 1 to 186 are large ATPase domain (RuvB-L); sequence MKDENSINFL…FGITARFELY (186 aa). ATP-binding positions include Leu25, Arg26, Gly67, Lys70, Thr71, Thr72, 133–135, Arg176, Tyr186, and Arg223; that span reads EDY. Residue Thr71 coordinates Mg(2+). Residues 187–257 form a small ATPAse domain (RuvB-S) region; the sequence is SEIELVEIIK…IVSIGLEMLR (71 aa). The head domain (RuvB-H) stretch occupies residues 260 to 347; the sequence is GEGLDEQDRN…DISENQRVSF (88 aa). Residues Arg315 and Arg320 each coordinate DNA.

The protein belongs to the RuvB family. Homohexamer. Forms an RuvA(8)-RuvB(12)-Holliday junction (HJ) complex. HJ DNA is sandwiched between 2 RuvA tetramers; dsDNA enters through RuvA and exits via RuvB. An RuvB hexamer assembles on each DNA strand where it exits the tetramer. Each RuvB hexamer is contacted by two RuvA subunits (via domain III) on 2 adjacent RuvB subunits; this complex drives branch migration. In the full resolvosome a probable DNA-RuvA(4)-RuvB(12)-RuvC(2) complex forms which resolves the HJ.

Its subcellular location is the cytoplasm. It carries out the reaction ATP + H2O = ADP + phosphate + H(+). In terms of biological role, the RuvA-RuvB-RuvC complex processes Holliday junction (HJ) DNA during genetic recombination and DNA repair, while the RuvA-RuvB complex plays an important role in the rescue of blocked DNA replication forks via replication fork reversal (RFR). RuvA specifically binds to HJ cruciform DNA, conferring on it an open structure. The RuvB hexamer acts as an ATP-dependent pump, pulling dsDNA into and through the RuvAB complex. RuvB forms 2 homohexamers on either side of HJ DNA bound by 1 or 2 RuvA tetramers; 4 subunits per hexamer contact DNA at a time. Coordinated motions by a converter formed by DNA-disengaged RuvB subunits stimulates ATP hydrolysis and nucleotide exchange. Immobilization of the converter enables RuvB to convert the ATP-contained energy into a lever motion, pulling 2 nucleotides of DNA out of the RuvA tetramer per ATP hydrolyzed, thus driving DNA branch migration. The RuvB motors rotate together with the DNA substrate, which together with the progressing nucleotide cycle form the mechanistic basis for DNA recombination by continuous HJ branch migration. Branch migration allows RuvC to scan DNA until it finds its consensus sequence, where it cleaves and resolves cruciform DNA. The sequence is that of Holliday junction branch migration complex subunit RuvB from Borrelia garinii subsp. bavariensis (strain ATCC BAA-2496 / DSM 23469 / PBi) (Borreliella bavariensis).